The sequence spans 304 residues: ATP phosphoribosyltransferase (304 aa).

It belongs to the ATP phosphoribosyltransferase family. Long subfamily. It depends on Mg(2+) as a cofactor.

The protein localises to the cytoplasm. It carries out the reaction 1-(5-phospho-beta-D-ribosyl)-ATP + diphosphate = 5-phospho-alpha-D-ribose 1-diphosphate + ATP. It functions in the pathway amino-acid biosynthesis; L-histidine biosynthesis; L-histidine from 5-phospho-alpha-D-ribose 1-diphosphate: step 1/9. Feedback inhibited by histidine. Catalyzes the condensation of ATP and 5-phosphoribose 1-diphosphate to form N'-(5'-phosphoribosyl)-ATP (PR-ATP). Has a crucial role in the pathway because the rate of histidine biosynthesis seems to be controlled primarily by regulation of HisG enzymatic activity. In Xylella fastidiosa (strain M12), this protein is ATP phosphoribosyltransferase.